We begin with the raw amino-acid sequence, 138 residues long: MPPKKANAAGPKKGQKTRKREKKNIPYGAAHIKSTFNNTIVTITDQQGNVIAWASSGHVGFKGSRKSTPFAAQLAAENAARKAQEHGVRKVDVFVMGPGSGRETAIRSLQAAGLEVGAISDVTPQPHNGCRPPKRRRV.

Over residues 1 to 12 the composition is skewed to low complexity; that stretch reads MPPKKANAAGPK. The segment at 1–23 is disordered; it reads MPPKKANAAGPKKGQKTRKREKK. Basic residues predominate over residues 13–22; it reads KGQKTRKREK.

The protein belongs to the universal ribosomal protein uS11 family. As to quaternary structure, part of the 30S ribosomal subunit. Interacts with proteins S7 and S18. Binds to IF-3.

Functionally, located on the platform of the 30S subunit, it bridges several disparate RNA helices of the 16S rRNA. Forms part of the Shine-Dalgarno cleft in the 70S ribosome. The protein is Small ribosomal subunit protein uS11 of Mycobacterium leprae (strain Br4923).